Reading from the N-terminus, the 172-residue chain is Shikimate kinase (172 aa).

Gly17–Thr22 lines the ATP pocket. Ser21 provides a ligand contact to Mg(2+). The substrate site is built by Asp39, Arg63, and Gly84. Position 122 (Arg122) interacts with ATP. Arg140 contributes to the substrate binding site.

This sequence belongs to the shikimate kinase family. In terms of assembly, monomer. Requires Mg(2+) as cofactor.

The protein localises to the cytoplasm. The catalysed reaction is shikimate + ATP = 3-phosphoshikimate + ADP + H(+). It functions in the pathway metabolic intermediate biosynthesis; chorismate biosynthesis; chorismate from D-erythrose 4-phosphate and phosphoenolpyruvate: step 5/7. Functionally, catalyzes the specific phosphorylation of the 3-hydroxyl group of shikimic acid using ATP as a cosubstrate. The protein is Shikimate kinase of Staphylococcus haemolyticus (strain JCSC1435).